A 154-amino-acid polypeptide reads, in one-letter code: Glycosylation-dependent cell adhesion molecule 1 (154 aa).

An N-terminal signal peptide occupies residues 1-18 (MKFLCILLLASLAATSLA). O-linked (GalNAc...) threonine; partial glycosylation occurs at threonine 34. Serine 48, serine 53, serine 57, serine 59, and serine 65 each carry phosphoserine. Residues 51 to 65 (DLSKEPSISREDLIS) are compositionally biased toward basic and acidic residues. A disordered region spans residues 51-115 (DLSKEPSISR…EHAPSDASTT (65 aa)). Asparagine 96 is a glycosylation site (N-linked (GlcNAc...) asparagine).

Belongs to the PP3/GlyCAM-1 family. As to expression, highly and specifically expressed in the lactating mammary gland.

The protein localises to the membrane. The protein is Glycosylation-dependent cell adhesion molecule 1 (GLYCAM1) of Capra hircus (Goat).